We begin with the raw amino-acid sequence, 144 residues long: Cytochrome c-type biogenesis protein CcmE (144 aa).

Topologically, residues 1 to 7 (MKPRHKR) are cytoplasmic. The helical; Signal-anchor for type II membrane protein transmembrane segment at 8 to 28 (ALIIIAALIAIGVAALLILNA) threads the bilayer. Residues 29–144 (LNSNIALYVT…DQAQKNGSAK (116 aa)) lie on the Periplasmic side of the membrane. Residues His121 and Tyr125 each contribute to the heme site.

Belongs to the CcmE/CycJ family.

It localises to the cell inner membrane. Functionally, heme chaperone required for the biogenesis of c-type cytochromes. Transiently binds heme delivered by CcmC and transfers the heme to apo-cytochromes in a process facilitated by CcmF and CcmH. The chain is Cytochrome c-type biogenesis protein CcmE from Polynucleobacter necessarius subsp. necessarius (strain STIR1).